We begin with the raw amino-acid sequence, 572 residues long: Glutathione hydrolase 1 (572 aa).

A signal peptide spans 1-22 (MSLVRTVTIVLFIIAFLQNAAA). Arg99 provides a ligand contact to L-glutamate. Residues Asn171 and Asn222 are each glycosylated (N-linked (GlcNAc...) asparagine). Thr368 functions as the Nucleophile in the catalytic mechanism. L-glutamate is bound by residues Thr386, Asn388, Glu407, Asp410, 440–441 (SS), and 461–462 (GG). Residue Asn505 is glycosylated (N-linked (GlcNAc...) asparagine). The interval 552-572 (GGRSELVAVSDPRKGGFPSGY) is disordered.

It belongs to the gamma-glutamyltransferase family. Expressed in embryo, roots and leaves. In mature plants, expression is restricted to vascular tissues of roots, leaves, flowers and siliques.

The protein resides in the secreted. Its subcellular location is the extracellular space. It is found in the apoplast. The enzyme catalyses an N-terminal (5-L-glutamyl)-[peptide] + an alpha-amino acid = 5-L-glutamyl amino acid + an N-terminal L-alpha-aminoacyl-[peptide]. It catalyses the reaction glutathione + H2O = L-cysteinylglycine + L-glutamate. The catalysed reaction is an S-substituted glutathione + H2O = an S-substituted L-cysteinylglycine + L-glutamate. The protein operates within sulfur metabolism; glutathione metabolism. Its function is as follows. May play a role in preventing oxidative stress by metabolizing extracellular oxidized glutathione (GSSG). The polypeptide is Glutathione hydrolase 1 (GGT1) (Arabidopsis thaliana (Mouse-ear cress)).